A 203-amino-acid polypeptide reads, in one-letter code: Somatotropin (203 aa).

The first 17 residues, 1-17 (MDRVVLMLSVLSLGVSS), serve as a signal peptide directing secretion. Gln18 is modified (pyrrolidone carboxylic acid). Residue His36 participates in Zn(2+) binding. The cysteines at positions 68 and 176 are disulfide-linked. Position 185 (Glu185) interacts with Zn(2+). Cys193 and Cys201 are oxidised to a cystine.

Belongs to the somatotropin/prolactin family.

The protein resides in the secreted. Growth hormone plays an important role in growth control and is involved in the regulation of several anabolic processes. Implicated as an osmoregulatory substance important for seawater adaptation. The sequence is that of Somatotropin (gh) from Pagrus major (Red sea bream).